The following is a 379-amino-acid chain: Chaperone protein DnaJ (379 aa).

The 66-residue stretch at 5 to 70 folds into the J domain; that stretch reads DYYEILGVPK…QKRAAYDQYG (66 aa). The segment at 134–212 adopts a CR-type zinc-finger fold; it reads GVTKEIRIPT…CHGHGRIEKT (79 aa). Residues C147, C150, C164, C167, C186, C189, C200, and C203 each coordinate Zn(2+). 4 CXXCXGXG motif repeats span residues 147–154, 164–171, 186–193, and 200–207; these read CEVCHGSG, CPTCHGAG, CPHCQGRG, and CNSCHGHG.

Belongs to the DnaJ family. Homodimer. Requires Zn(2+) as cofactor.

The protein resides in the cytoplasm. In terms of biological role, participates actively in the response to hyperosmotic and heat shock by preventing the aggregation of stress-denatured proteins and by disaggregating proteins, also in an autonomous, DnaK-independent fashion. Unfolded proteins bind initially to DnaJ; upon interaction with the DnaJ-bound protein, DnaK hydrolyzes its bound ATP, resulting in the formation of a stable complex. GrpE releases ADP from DnaK; ATP binding to DnaK triggers the release of the substrate protein, thus completing the reaction cycle. Several rounds of ATP-dependent interactions between DnaJ, DnaK and GrpE are required for fully efficient folding. Also involved, together with DnaK and GrpE, in the DNA replication of plasmids through activation of initiation proteins. This is Chaperone protein DnaJ from Cronobacter sakazakii (strain ATCC BAA-894) (Enterobacter sakazakii).